Reading from the N-terminus, the 251-residue chain is 5-oxoprolinase subunit A 3 (251 aa).

The protein belongs to the LamB/PxpA family. As to quaternary structure, forms a complex composed of PxpA, PxpB and PxpC.

It carries out the reaction 5-oxo-L-proline + ATP + 2 H2O = L-glutamate + ADP + phosphate + H(+). Its function is as follows. Catalyzes the cleavage of 5-oxoproline to form L-glutamate coupled to the hydrolysis of ATP to ADP and inorganic phosphate. This is 5-oxoprolinase subunit A 3 from Pseudomonas aeruginosa (strain ATCC 15692 / DSM 22644 / CIP 104116 / JCM 14847 / LMG 12228 / 1C / PRS 101 / PAO1).